A 356-amino-acid polypeptide reads, in one-letter code: Tyrosine recombinase XerS (356 aa).

Positions 16-121 (IMPWYVLDYY…ALSSLYKYLT (106 aa)) constitute a Core-binding (CB) domain. The region spanning 169-354 (AFLDYVDKEY…VNDEQKTALD (186 aa)) is the Tyr recombinase domain. Catalysis depends on residues Arg-210, Lys-234, His-306, Arg-309, and His-332. Tyr-341 serves as the catalytic O-(3'-phospho-DNA)-tyrosine intermediate.

It belongs to the 'phage' integrase family. XerS subfamily.

It localises to the cytoplasm. With respect to regulation, ftsK is required for recombination. In terms of biological role, site-specific tyrosine recombinase, which acts by catalyzing the cutting and rejoining of the recombining DNA molecules. Essential to convert dimers of the bacterial chromosome into monomers to permit their segregation at cell division. This Streptococcus pyogenes serotype M12 (strain MGAS9429) protein is Tyrosine recombinase XerS.